We begin with the raw amino-acid sequence, 265 residues long: Transcriptional activator AggR (265 aa).

The region spanning 164–261 is the HTH araC/xylS-type domain; the sequence is DKVRNTIEKD…GITPKQFLTY (98 aa). DNA-binding regions (H-T-H motif) lie at residues 181–202 and 228–251; these read AIIA…ESEY and ISQI…VKHF.

In terms of assembly, homodimer.

In terms of biological role, transcriptional activator of aggregative adherence fimbria I expression in enteroaggregative E.coli. The polypeptide is Transcriptional activator AggR (aggR) (Escherichia coli).